The sequence spans 237 residues: MPRPGKDSYDEQKPPYSYIWLTYMAIQDSDDKMLPLTEIYKYIMDRFPFYRKNTQRWQNSLRHNLSFNDCFIKIPRRADRPGKGSYWAVHPNASGMFENGSCLRRRKRFRARGGQDDDDDDFHHPAPSKISRKNPLPLLPEPPITPPLLSSLFPNLPPSLPNFCLFPPGMDPTKSLLLNPLSLLLMPHFLKNSSNFESSTPHSETSEISGSGSSSSKTPTPEAGFNSSFSIESILSS.

Residues 12–103 (QKPPYSYIWL…SGMFENGSCL (92 aa)) constitute a DNA-binding region (fork-head). 2 disordered regions span residues 110–141 (RARG…LLPE) and 195–237 (NFES…ILSS). Low complexity-rich tracts occupy residues 206 to 216 (SEISGSGSSSS) and 227 to 237 (SSFSIESILSS).

The protein resides in the nucleus. Its function is as follows. Lin-31 regulates how vulval precursor cells choose their fate. It helps specify three alternative cell fates in vulval development. The polypeptide is Protein lin-31 (lin-31) (Caenorhabditis elegans).